The primary structure comprises 286 residues: NADPH-dependent 7-cyano-7-deazaguanine reductase (286 aa).

Residue 92 to 94 participates in substrate binding; it reads IES. 94–95 serves as a coordination point for NADPH; that stretch reads SK. Cysteine 194 serves as the catalytic Thioimide intermediate. Aspartate 201 serves as the catalytic Proton donor. 233–234 contributes to the substrate binding site; the sequence is HE. 262–263 contributes to the NADPH binding site; it reads RG.

Belongs to the GTP cyclohydrolase I family. QueF type 2 subfamily. Homodimer.

It localises to the cytoplasm. The enzyme catalyses 7-aminomethyl-7-carbaguanine + 2 NADP(+) = 7-cyano-7-deazaguanine + 2 NADPH + 3 H(+). It participates in tRNA modification; tRNA-queuosine biosynthesis. In terms of biological role, catalyzes the NADPH-dependent reduction of 7-cyano-7-deazaguanine (preQ0) to 7-aminomethyl-7-deazaguanine (preQ1). This chain is NADPH-dependent 7-cyano-7-deazaguanine reductase, found in Shewanella sp. (strain MR-7).